A 242-amino-acid chain; its full sequence is Small ribosomal subunit protein uS2 (242 aa).

The protein belongs to the universal ribosomal protein uS2 family.

The chain is Small ribosomal subunit protein uS2 from Shewanella frigidimarina (strain NCIMB 400).